A 529-amino-acid polypeptide reads, in one-letter code: CRISPR-associated endodeoxyribonuclease Cas12f1 (529 aa).

Positions 1 to 95 are zinc finger domain (ZF); sequence MAKNTITKTL…RGQFPDAVFW (95 aa). Zn(2+)-binding residues include Cys50, His53, Cys69, and Cys72. The interval 96–192 is recognition domain (REC); sequence QEISEIFRQL…PTTKSDNFPI (97 aa). The segment at 193 to 312 is wedge domain (WED); sequence PLVKQKGGQY…MLNLSIDVPK (120 aa). The interval 313 to 321 is linker; that stretch reads IDKGVDPSI. The interval 322–473 is ruvC-I; sequence IGGIDVGVKS…RKVAPNNTSK (152 aa). Catalysis depends on residues Asp326 and Glu422. The interval 474–508 is target nucleic acid-binding (TNB); it reads TCSKCGHLNNYFNFEYRKKNKFPHFKCEKCNFKEN. The Zn(2+) site is built by Cys475 and Cys478. Arg490 is an active-site residue. Zn(2+)-binding residues include Cys500 and Cys503. Residues 509–529 form a ruvC-II region; sequence ADYNAALNISNPKLKSTKEEP. The active site involves Asp510.

Belongs to the CRISPR-associated endonuclease Cas12f family. In terms of assembly, an asymmetric homodimer. Guide RNA is probably required for dimerization. Mg(2+) is required as a cofactor. Zn(2+) serves as cofactor.

Its activity is regulated as follows. Target ssDNA cleavage is inhibited by EDTA. Activity is maximal with 5-50 mM NaCl, is less efficient at higher NaCl concentrations. Functionally, CRISPR (clustered regularly interspaced short palindromic repeat), is an adaptive immune system that provides protection against mobile genetic elements (viruses, transposable elements and conjugative plasmids). CRISPR clusters contain sequences complementary to antecedent mobile elements and target invading nucleic acids. CRISPR clusters are transcribed and processed into CRISPR RNA (crRNA), which requires a trans-encoded small RNA (tracrRNA), but not this protein (in vitro). Upon expression in E.coli of this protein, a mini CRISPR array and the probable tracrRNA, the protein associates with both RNAs. The mini system is not active in E.coli against phiX174 phage, nor is it active in protection against transformation by foreign plasmids. In vitro the purified protein-tracrRNA-crRNA complex cleaves ssDNA complementary to the crRNA; target cleavage requires both tracrRNA and crRNA, but not a protospacer adjacent motif (PAM). The tracrRNA-crRNA can be replaced by a single guide RNA (sgRNA). 2-nucleotide mismatches in the middle of the crRNA:DNA heteroduplex decrease cleavage. Cleavage occurs just downstream of the heteroduplex. Activation of this protein results in non-specific ssDNA degradation in vitro. In vitro and in E.coli (coexpressed with sgRNA) has dsDNA endonuclease activity, recognizing the 5' PAM sequence TTTR; both sgRNA and a PAM are required for activity. Cleaves the target strand 24 and the nontarget strand 22 bases upstream of the PAM (respectively), resulting in 5' overhangs. The 2 monomers interact differently with the sgRNA and target DNA. Mutagenesis of a dimeric construct shows that one of the RuvC monomers probably cleaves both DNA strands. This Uncultured archaeon protein is CRISPR-associated endodeoxyribonuclease Cas12f1.